Consider the following 448-residue polypeptide: Tubulin beta chain (448 aa).

8 residues coordinate GTP: Gln11, Glu69, Ser138, Gly142, Thr143, Gly144, Asn204, and Asn226. Mg(2+) is bound at residue Glu69. The segment at 425 to 448 (YQDASISEGEEEYLEEEEPLEHEE) is disordered. The segment covering 432-448 (EGEEEYLEEEEPLEHEE) has biased composition (acidic residues).

It belongs to the tubulin family. In terms of assembly, dimer of alpha and beta chains. A typical microtubule is a hollow water-filled tube with an outer diameter of 25 nm and an inner diameter of 15 nM. Alpha-beta heterodimers associate head-to-tail to form protofilaments running lengthwise along the microtubule wall with the beta-tubulin subunit facing the microtubule plus end conferring a structural polarity. Microtubules usually have 13 protofilaments but different protofilament numbers can be found in some organisms and specialized cells. The cofactor is Mg(2+).

It localises to the cytoplasm. It is found in the cytoskeleton. Its function is as follows. Tubulin is the major constituent of microtubules, a cylinder consisting of laterally associated linear protofilaments composed of alpha- and beta-tubulin heterodimers. Microtubules grow by the addition of GTP-tubulin dimers to the microtubule end, where a stabilizing cap forms. Below the cap, tubulin dimers are in GDP-bound state, owing to GTPase activity of alpha-tubulin. This Aspergillus flavus protein is Tubulin beta chain.